The sequence spans 135 residues: Small ribosomal subunit protein uS11 (135 aa).

Positions 1 to 10 (MPPKTRSQTG) are enriched in polar residues. Residues 1–28 (MPPKTRSQTGAKKVRRKEKKNVAHGHAH) are disordered. Residues 12 to 28 (KKVRRKEKKNVAHGHAH) show a composition bias toward basic residues.

The protein belongs to the universal ribosomal protein uS11 family. Part of the 30S ribosomal subunit. Interacts with proteins S7 and S18. Binds to IF-3.

In terms of biological role, located on the platform of the 30S subunit, it bridges several disparate RNA helices of the 16S rRNA. Forms part of the Shine-Dalgarno cleft in the 70S ribosome. In Acidothermus cellulolyticus (strain ATCC 43068 / DSM 8971 / 11B), this protein is Small ribosomal subunit protein uS11.